Reading from the N-terminus, the 2813-residue chain is A-kinase anchor protein 13 (2813 aa).

Disordered regions lie at residues 304-400 (AQDP…QDSC) and 415-439 (LSSC…QESL). Polar residues predominate over residues 427 to 439 (TKSSGMPTDQESL). The important for interaction with PRKAR2A stretch occupies residues 494 to 516 (WKNVLQGGESTKERFENSNIGTA). 3 disordered regions span residues 539-585 (AASS…VDQN), 632-653 (HQNS…SPIC), and 690-726 (SEST…RDTQ). Residues 561–577 (STEKTAETETSRSREES) show a composition bias toward basic and acidic residues. The span at 690 to 702 (SESTTARQPSSQD) shows a compositional bias: polar residues. At serine 790 the chain carries Phosphoserine. Disordered stretches follow at residues 805–856 (VPSQ…AAEL) and 939–965 (ENAL…QFHE). Position 815 is a phosphothreonine (threonine 815). A compositionally biased stretch (basic and acidic residues) spans 835–844 (PDTRPLEDRA). Polar residues-rich tracts occupy residues 847 to 856 (LSTSSTAAEL) and 939 to 948 (ENALSSGTLQ). Position 953 is a phosphothreonine (threonine 953). Serine 983 carries the phosphoserine modification. Disordered regions lie at residues 1431 to 1455 (GVLK…DSII) and 1467 to 1542 (DITG…DSIT). Low complexity predominate over residues 1467-1478 (DITGSSSSTDDT). Residues 1488 to 1497 (GSDVSLSQIL) are compositionally biased toward polar residues. Phosphoserine occurs at positions 1489, 1507, 1540, 1565, and 1602. Over residues 1525 to 1540 (SEPADPGDVEEEEMDS) the composition is skewed to acidic residues. Residues 1585–1715 (RVLGDVVRRP…HSTFHNTSAN (131 aa)) form an important for interaction with MAP2K3 region. Positions 1601–1638 (FSLEGLTGGAGVGNKPSSSLEVSSANAEELRHPFSGEE) are disordered. Positions 1615–1626 (KPSSSLEVSSAN) are enriched in polar residues. Over residues 1628-1638 (EELRHPFSGEE) the composition is skewed to basic and acidic residues. Residues serine 1642, serine 1645, and serine 1647 each carry the phosphoserine modification. At lysine 1670 the chain carries N6-methyllysine. Residues 1755–1793 (KMSSSKKSKEKEKEKDKIKEKEKDSKDKEKDKKTVNGHT) are disordered. Positions 1758 to 1790 (SSKKSKEKEKEKDKIKEKEKDSKDKEKDKKTVN) form a coiled coil. Residues 1761–1788 (KSKEKEKEKDKIKEKEKDSKDKEKDKKT) show a composition bias toward basic and acidic residues. Residues 1791–1838 (GHTFSSIPVVGPISCSQCMKPFTNKDAYTCANCSAFVHKGCRESLASC) form a Phorbol-ester/DAG-type zinc finger. 3 positions are modified to phosphoserine: serine 1876, serine 1895, and serine 1929. The tract at residues 1919 to 2813 (MSNTWKFLSH…VSAEGEEIFC (895 aa)) is interaction with ESR1. Position 1930 is a phosphothreonine (threonine 1930). Residues serine 1932 and serine 1945 each carry the phosphoserine modification. In terms of domain architecture, DH spans 1994-2191 (KRQEVIYELM…KDVIGAVDSK (198 aa)). The region spanning 2231 to 2333 (KLVRDGSVFL…WIQIIQDTIN (103 aa)) is the PH domain. Phosphoserine is present on residues serine 2345 and serine 2398. Residues 2345–2381 (SENEEEKKMLDTRARELKEQLHQKDQKILLLLEEKEM) are a coiled coil. Positions 2466–2502 (ETFGGFDSHQMNASKGGEKEEGDDGQDLRRTESDSGL) are disordered. Threonine 2467 bears the Phosphothreonine mark. A Phosphoserine modification is found at serine 2473. Residues 2491 to 2502 (QDLRRTESDSGL) are compositionally biased toward basic and acidic residues. Serine 2563 and serine 2566 each carry phosphoserine. Residues 2568-2683 (LIEQEKQRSL…RLSQRQTERD (116 aa)) are a coiled coil. A compositionally biased stretch (basic and acidic residues) spans 2665 to 2684 (QEQLRREAERLSQRQTERDL). The segment at 2665–2813 (QEQLRREAER…VSAEGEEIFC (149 aa)) is disordered. Phosphoserine is present on residues serine 2703, serine 2709, and serine 2728. Residues 2720–2735 (SLDSELSVSPKRNSIS) show a composition bias toward polar residues. A compositionally biased stretch (low complexity) spans 2760–2771 (QSQAPASTSAST).

Interacts with the cAMP-dependent protein kinase (PKA) holoenzyme and with the regulatory subunit PRKAR2A. Interacts with RHOA. Also interacts with RHOB and RHOC. Identified in a ternary complex with RHOA and PRKAR2A. Identified in a complex with NR3C1 and RHOA. Interacts with BRAF and KSR1. Identified in a complex with BRAF and KSR1. Component of a signaling complex containing at least AKAP13, PKN1, MAPK14, ZAK and MAP2K3. Within this complex, AKAP13 interacts directly with PKN1, which in turn recruits MAPK14, MAP2K3 and ZAK. Interacts (phosphorylated form) with YWHAB and YWHAZ. Interaction with YWHAB inhibits activation of RHOA, interferes with PKN1 binding and activation of MAP kinases. Interacts with GNA12. Interacts with IKBKB. Interacts with ESR1, THRA, PPARA and NME2. Interacts (via the C-terminal domain after the PH domain) with MEF2C and RXRB. Interacts (via the C-terminal domain after the PH domain) with PRKD1. In terms of tissue distribution, detected in mammary gland. Detected in heart (at protein level). Expressed as a 5.3 kb transcript in hematopoietic cells, skeletal muscle, lung, heart, estrogen-responsive reproductive tissues, including breast ductal epithelium. Also found in testis and breast cancer cell lines. Predominantly expressed as a 10 kb transcript in the heart and at lower levels in the lung, placenta, kidney, pancreas, skeletal muscle and liver. Transcripts of between 6-9 kb are also expressed in myeloid and lymphoid lineages, a variety of epithelial tissues, and in skeletal muscle.

It localises to the cytoplasm. It is found in the cytosol. The protein resides in the cell cortex. Its subcellular location is the nucleus. The protein localises to the membrane. Functionally, scaffold protein that plays an important role in assembling signaling complexes downstream of several types of G protein-coupled receptors. Activates RHOA in response to signaling via G protein-coupled receptors via its function as Rho guanine nucleotide exchange factor. May also activate other Rho family members. Part of a kinase signaling complex that links ADRA1A and ADRA1B adrenergic receptor signaling to the activation of downstream p38 MAP kinases, such as MAPK11 and MAPK14. Part of a signaling complex that links ADRA1B signaling to the activation of RHOA and IKBKB/IKKB, leading to increased NF-kappa-B transcriptional activity. Part of a RHOA-dependent signaling cascade that mediates responses to lysophosphatidic acid (LPA), a signaling molecule that activates G-protein coupled receptors and potentiates transcriptional activation of the glucocorticoid receptor NR3C1. Part of a signaling cascade that stimulates MEF2C-dependent gene expression in response to lysophosphatidic acid (LPA). Part of a signaling pathway that activates MAPK11 and/or MAPK14 and leads to increased transcription activation of the estrogen receptors ESR1 and ESR2. Part of a signaling cascade that links cAMP and EGFR signaling to BRAF signaling and to PKA-mediated phosphorylation of KSR1, leading to the activation of downstream MAP kinases, such as MAPK1 or MAPK3. Functions as a scaffold protein that anchors cAMP-dependent protein kinase (PKA) and PRKD1. This promotes activation of PRKD1, leading to increased phosphorylation of HDAC5 and ultimately cardiomyocyte hypertrophy. Has no guanine nucleotide exchange activity on CDC42, Ras or Rac. Required for normal embryonic heart development, and in particular for normal sarcomere formation in the developing cardiomyocytes. Plays a role in cardiomyocyte growth and cardiac hypertrophy in response to activation of the beta-adrenergic receptor by phenylephrine or isoproterenol. Required for normal adaptive cardiac hypertrophy in response to pressure overload. Plays a role in osteogenesis. The protein is A-kinase anchor protein 13 (AKAP13) of Homo sapiens (Human).